The following is a 602-amino-acid chain: mRNA-decapping enzyme 1A (602 aa).

Position 82 is a phosphoserine (S82). Residues 152 to 161 (RSQQAARDKQ) are compositionally biased toward basic and acidic residues. Disordered stretches follow at residues 152-174 (RSQQAARDKQSPSQANGCSDQRP), 191-234 (NQMG…PSGH), and 267-291 (GDASQKEPSSFLPFPFEQSGGAPQS). Phosphoserine occurs at positions 162, 199, and 200. The span at 193–229 (MGGSNISSPGLQPSTQLSNLGSTETLEETPSGSQDKS) shows a compositional bias: polar residues. Phosphoserine occurs at positions 335 and 339. T367 carries the post-translational modification Phosphothreonine. The residue at position 372 (S372) is a Phosphoserine. At R395 the chain carries Asymmetric dimethylarginine. T420 carries the phosphothreonine modification. 4 positions are modified to phosphoserine: S441, S542, S543, and S545. Phosphothreonine occurs at positions 548 and 551.

The protein belongs to the DCP1 family. In terms of assembly, forms a complex with EDC3, DCP2, DDX6 and EDC4/HEDLS, within this complex directly interacts with EDC3. Part of a cytoplasmic complex containing proteins involved in mRNA decay, including XRN1 and LSM1. Interacts with DCP1B. Interacts with DCP2. Interacts with DDX17 in an RNA-independent manner. Interacts with PNRC2. Interacts with SMAD4. Interacts with UPF1. Interacts with ZC3HAV1. Interacts with ZFP36L1. Interacts with NBDY. Interacts with DHX34; the interaction is RNA-independent. Ubiquitous, with highest expression in the spleen and testis (at protein level).

The protein resides in the cytoplasm. Its subcellular location is the P-body. The protein localises to the nucleus. The enzyme catalyses a 5'-end (N(7)-methyl 5'-triphosphoguanosine)-ribonucleoside in mRNA + H2O = N(7)-methyl-GDP + a 5'-end phospho-ribonucleoside in mRNA + 2 H(+). Its function is as follows. Necessary for the degradation of mRNAs, both in normal mRNA turnover and in nonsense-mediated mRNA decay. Removes the 7-methyl guanine cap structure from mRNA molecules, yielding a 5'-phosphorylated mRNA fragment and 7m-GDP. Contributes to the transactivation of target genes after stimulation by TGFB1. Essential for embryonic development. This chain is mRNA-decapping enzyme 1A (Dcp1a), found in Mus musculus (Mouse).